Reading from the N-terminus, the 401-residue chain is Argininosuccinate synthase (401 aa).

ATP is bound at residue 9–17; that stretch reads AYSGGLDTS. Tyr-88 is an L-citrulline binding site. Gly-118 contributes to the ATP binding site. The L-aspartate site is built by Thr-120, Asn-124, and Asp-125. Residue Asn-124 participates in L-citrulline binding. Residues Arg-128, Ser-176, Ser-185, Glu-261, and Tyr-273 each coordinate L-citrulline.

Belongs to the argininosuccinate synthase family. Type 1 subfamily. In terms of assembly, homotetramer.

The protein resides in the cytoplasm. The catalysed reaction is L-citrulline + L-aspartate + ATP = 2-(N(omega)-L-arginino)succinate + AMP + diphosphate + H(+). Its pathway is amino-acid biosynthesis; L-arginine biosynthesis; L-arginine from L-ornithine and carbamoyl phosphate: step 2/3. In Symbiobacterium thermophilum (strain DSM 24528 / JCM 14929 / IAM 14863 / T), this protein is Argininosuccinate synthase.